The chain runs to 203 residues: Secreted phosphoprotein 24 (203 aa).

Positions 1–23 are cleaved as a signal peptide; that stretch reads MEKMVMKMLVIFVFGMNHWTCTG. 2 disulfides stabilise this stretch: C86/C97 and C110/C128. At S90 the chain carries Phosphoserine. A phosphoserine mark is found at S138, S139, S166, and S175. A disordered region spans residues 155 to 174; the sequence is NSHLLGLTPDRSRGEPLYER. The span at 164–174 shows a compositional bias: basic and acidic residues; sequence DRSRGEPLYER.

It belongs to the SPP2 family. Multiply phosphorylated at serine residues. In terms of processing, phosphorylation sites are present in the extracellular medium.

It localises to the secreted. Functionally, could coordinate an aspect of bone turnover. This chain is Secreted phosphoprotein 24 (SPP2), found in Ovis aries (Sheep).